We begin with the raw amino-acid sequence, 697 residues long: Elongation factor G (697 aa).

A tr-type G domain is found at 10-285 (EKTRNIGIVA…GVNDYLPSPL (276 aa)). Residues 19–26 (AHIDAGKT), 83–87 (DTPGH), and 137–140 (NKMD) contribute to the GTP site.

Belongs to the TRAFAC class translation factor GTPase superfamily. Classic translation factor GTPase family. EF-G/EF-2 subfamily.

It localises to the cytoplasm. Its function is as follows. Catalyzes the GTP-dependent ribosomal translocation step during translation elongation. During this step, the ribosome changes from the pre-translocational (PRE) to the post-translocational (POST) state as the newly formed A-site-bound peptidyl-tRNA and P-site-bound deacylated tRNA move to the P and E sites, respectively. Catalyzes the coordinated movement of the two tRNA molecules, the mRNA and conformational changes in the ribosome. In Ligilactobacillus salivarius (strain UCC118) (Lactobacillus salivarius), this protein is Elongation factor G.